A 265-amino-acid chain; its full sequence is Mlc titration factor A (265 aa).

Residues histidine 111, histidine 148, histidine 152, and glutamate 211 each contribute to the Zn(2+) site.

It belongs to the MtfA family. In terms of assembly, interacts with Mlc. Requires Zn(2+) as cofactor.

It localises to the cytoplasm. Functionally, involved in the modulation of the activity of the glucose-phosphotransferase system (glucose-PTS). Interacts with the transcriptional repressor Mlc, preventing its interaction with DNA and leading to the modulation of expression of genes regulated by Mlc, including ptsG, which encodes the PTS system glucose-specific EIICB component. In terms of biological role, shows zinc-dependent metallopeptidase activity. This Shigella dysenteriae serotype 1 (strain Sd197) protein is Mlc titration factor A.